A 96-amino-acid chain; its full sequence is Putative pterin-4-alpha-carbinolamine dehydratase (96 aa).

The protein belongs to the pterin-4-alpha-carbinolamine dehydratase family.

The catalysed reaction is (4aS,6R)-4a-hydroxy-L-erythro-5,6,7,8-tetrahydrobiopterin = (6R)-L-erythro-6,7-dihydrobiopterin + H2O. This is Putative pterin-4-alpha-carbinolamine dehydratase from Brucella anthropi (strain ATCC 49188 / DSM 6882 / CCUG 24695 / JCM 21032 / LMG 3331 / NBRC 15819 / NCTC 12168 / Alc 37) (Ochrobactrum anthropi).